Reading from the N-terminus, the 925-residue chain is Nuclear factor of activated T-cells, cytoplasmic 2 (925 aa).

Positions Met-1–Gln-95 are disordered. Ser-23 carries the phosphoserine modification. The 9aaTAD signature appears at Asp-26 to Phe-34. Ser-99, Ser-107, and Ser-110 each carry phosphoserine. The calcineurin-binding stretch occupies residues Pro-111–Thr-116. The segment at His-119–Asp-199 is transactivation domain A (TAD-A). Residues Ser-148, Ser-168, Ser-171, Ser-172, Ser-174, Ser-175, Ser-177, and Ser-180 each carry the phosphoserine modification. Residues Tyr-161–Ser-175 form a required for cytoplasmic retention of the phosphorylated form region. 2 repeat units span residues Ser-184–Asp-200 and Ser-213–Asp-229. The segment at Ser-184–Gln-286 is 3 X approximate SP repeats. The segment at Asn-195–Val-297 is disordered. Phosphoserine is present on residues Ser-213, Ser-217, Ser-221, Ser-236, and Ser-243. Residues Pro-214–Thr-224 are compositionally biased toward polar residues. Residues Lys-251–Arg-253 carry the Nuclear localization signal motif. Phosphoserine is present on residues Ser-255, Ser-268, Ser-274, Ser-276, Ser-280, Ser-326, Ser-330, and Ser-363. The span at Pro-264–Ser-281 shows a compositional bias: low complexity. Residues Ser-272–Gln-286 form a 3; approximate repeat. Residues Ala-392 to Ala-574 form the RHD domain. The DNA-binding element occupies Arg-421–Gly-428. The Nuclear localization signal signature appears at Lys-664–Lys-666. A phosphoserine mark is found at Ser-755, Ser-757, Ser-759, Ser-856, and Ser-859. Residues Pro-839–Ile-894 are disordered. The span at Thr-862–Ala-874 shows a compositional bias: polar residues. The Nuclear export signal motif lies at Tyr-904 to Arg-913.

Member of the multicomponent NFATC transcription complex that consists of at least two components, a pre-existing cytoplasmic component NFATC2 and an inducible nuclear component NFATC1. Other members such as NFATC4, NFATC3 or members of the activating protein-1 family, MAF, GATA4 and Cbp/p300 can also bind the complex. The phosphorylated form specifically interacts with XPO1; which mediates nuclear export. NFATC proteins bind to DNA as monomers. Interacts with NFATC2IP. Interacts with FOXP3. Interacts with TBX21 ('Thr-303' phosphorylated form). Interacts with KAT2A. Interacts with HOMER2 and HOMER3; this interaction competes with calcineurin/PPP3CA-binding and hence prevents NFATC2 dephosphorylation and activation. Interacts with protein phosphatase PPP3CA/calcineurin A. Interacts with AKAP5 (via leucine zipper domain); this is required for NFATC2/NFAT1 recruitment to CRAC channels. Post-translationally, in resting cells, phosphorylated by NFATC-kinase on at least 18 sites in the 99-363 region. Upon cell stimulation, all these sites except Ser-243 are dephosphorylated by calcineurin. Dephosphorylation induces a conformational change that simultaneously exposes an NLS and masks an NES, which results in nuclear localization. Simultaneously, Ser-53 or Ser-56 is phosphorylated; which is required for full transcriptional activity. Ubiquitinated in endothelial cells by RNF213 downstream of the non-canonical Wnt signaling pathway, leading to its degradation by the proteasome. As to expression, expressed in thymus, spleen, heart, testis, brain, placenta, muscle and pancreas. Isoform 1 is highly expressed in the small intestine, heart, testis, prostate, thymus, placenta and thyroid. Isoform 3 is highly expressed in stomach, uterus, placenta, trachea and thyroid.

Its subcellular location is the cytoplasm. It localises to the nucleus. Its function is as follows. Plays a role in the inducible expression of cytokine genes in T-cells, especially in the induction of the IL-2, IL-3, IL-4, TNF-alpha or GM-CSF. Promotes invasive migration through the activation of GPC6 expression and WNT5A signaling pathway. Is involved in the negative regulation of chondrogenesis. Recruited by AKAP5 to ORAI1 pore-forming subunit of CRAC channels in Ca(2+) signaling microdomains where store-operated Ca(2+) influx is coupled to calmodulin and calcineurin signaling and activation of NFAT-dependent transcriptional responses. The sequence is that of Nuclear factor of activated T-cells, cytoplasmic 2 (NFATC2) from Homo sapiens (Human).